The chain runs to 342 residues: Delta(6)-protoilludene synthase 8 (342 aa).

Mg(2+) is bound at residue D81. The short motif at 93–97 (RDMVD) is the DDXXD motif element. Residues N217, S221, and E225 each contribute to the Mg(2+) site. Positions 217–225 (NDLVSYNRE) match the NSE/DTE motif motif. Residues R305 and Y306 each coordinate (2E,6E)-farnesyl diphosphate.

This sequence belongs to the terpene synthase family. Mg(2+) is required as a cofactor.

The catalysed reaction is (2E,6E)-farnesyl diphosphate = Delta(6)-protoilludene + diphosphate. Its function is as follows. Terpene cyclase that catalyzes the cyclization of farnesyl diphosphate (FPP) to delta(6)-protoilludene. This is Delta(6)-protoilludene synthase 8 from Postia placenta (strain ATCC 44394 / Madison 698-R) (Brown rot fungus).